A 355-amino-acid chain; its full sequence is Protein RecA (355 aa).

G73–T80 is a binding site for ATP.

This sequence belongs to the RecA family.

It is found in the cytoplasm. Functionally, can catalyze the hydrolysis of ATP in the presence of single-stranded DNA, the ATP-dependent uptake of single-stranded DNA by duplex DNA, and the ATP-dependent hybridization of homologous single-stranded DNAs. It interacts with LexA causing its activation and leading to its autocatalytic cleavage. This Solidesulfovibrio magneticus (strain ATCC 700980 / DSM 13731 / RS-1) (Desulfovibrio magneticus) protein is Protein RecA.